The following is a 93-amino-acid chain: Large ribosomal subunit protein uL23cy (93 aa).

It belongs to the universal ribosomal protein uL23 family. In terms of assembly, part of the 50S ribosomal subunit.

It localises to the plastid. The protein localises to the chloroplast. Binds to 23S rRNA. The protein is Large ribosomal subunit protein uL23cy (rpl23-B) of Sorghum bicolor (Sorghum).